The primary structure comprises 252 residues: NAD-dependent protein deacetylase (252 aa).

Residues 1–248 (MYLVEEAKKV…PEVISHIQSL (248 aa)) enclose the Deacetylase sirtuin-type domain. NAD(+) is bound by residues Ala-26, Thr-30, Phe-37, Arg-38, Gln-102, Val-104, Asp-105, and His-120. Residue Phe-37 coordinates nicotinamide. Residues Val-104 and Asp-105 each contribute to the nicotinamide site. The Proton acceptor role is filled by His-120. Zn(2+)-binding residues include Cys-128, Cys-131, Cys-153, and Cys-155. NAD(+) is bound by residues Ser-191, Ser-192, Asn-216, and Ile-234.

It belongs to the sirtuin family. Class U subfamily. Requires Zn(2+) as cofactor.

The protein resides in the cytoplasm. The enzyme catalyses N(6)-acetyl-L-lysyl-[protein] + NAD(+) + H2O = 2''-O-acetyl-ADP-D-ribose + nicotinamide + L-lysyl-[protein]. In terms of biological role, NAD-dependent protein deacetylase which modulates the activities of several enzymes which are inactive in their acetylated form. Deacetylates the N-terminal lysine residue of Alba, the major archaeal chromatin protein and that, in turn, increases Alba's DNA binding affinity, thereby repressing transcription. This Sulfolobus acidocaldarius (strain ATCC 33909 / DSM 639 / JCM 8929 / NBRC 15157 / NCIMB 11770) protein is NAD-dependent protein deacetylase.